A 546-amino-acid polypeptide reads, in one-letter code: Chaperonin GroEL 2 (546 aa).

ATP contacts are provided by residues 30–33, lysine 51, 87–91, glycine 415, 479–481, and aspartate 495; these read TLGP, DGTTT, and NAA. The interval 524-546 is disordered; the sequence is APKDAPPAQPAGVPGAGGTGFDF. The segment covering 537–546 has biased composition (gly residues); that stretch reads PGAGGTGFDF.

The protein belongs to the chaperonin (HSP60) family. In terms of assembly, forms a cylinder of 14 subunits composed of two heptameric rings stacked back-to-back. Interacts with the co-chaperonin GroES.

The protein localises to the cytoplasm. It catalyses the reaction ATP + H2O + a folded polypeptide = ADP + phosphate + an unfolded polypeptide.. Its function is as follows. Together with its co-chaperonin GroES, plays an essential role in assisting protein folding. The GroEL-GroES system forms a nano-cage that allows encapsulation of the non-native substrate proteins and provides a physical environment optimized to promote and accelerate protein folding. The chain is Chaperonin GroEL 2 from Burkholderia thailandensis (strain ATCC 700388 / DSM 13276 / CCUG 48851 / CIP 106301 / E264).